A 526-amino-acid polypeptide reads, in one-letter code: Peptide chain release factor 3 (526 aa).

One can recognise a tr-type G domain in the interval 9–277 (DRRRTFAIVS…TFVDHAPAPL (269 aa)). GTP contacts are provided by residues 18-25 (SHPDAGKT), 86-90 (DTPGH), and 140-143 (NKLD).

This sequence belongs to the TRAFAC class translation factor GTPase superfamily. Classic translation factor GTPase family. PrfC subfamily.

The protein resides in the cytoplasm. In terms of biological role, increases the formation of ribosomal termination complexes and stimulates activities of RF-1 and RF-2. It binds guanine nucleotides and has strong preference for UGA stop codons. It may interact directly with the ribosome. The stimulation of RF-1 and RF-2 is significantly reduced by GTP and GDP, but not by GMP. The protein is Peptide chain release factor 3 of Geobacter sulfurreducens (strain ATCC 51573 / DSM 12127 / PCA).